The sequence spans 488 residues: Coiled-coil domain-containing protein 77 (488 aa).

Residues 21 to 48 (GVAVSGPTKRRGMADSLESTPLPSPEDR) form a disordered region. Serine 36 is modified (phosphoserine). Lysine 51 is covalently cross-linked (Glycyl lysine isopeptide (Lys-Gly) (interchain with G-Cter in SUMO2)). Coiled coils occupy residues 55–118 (SKEL…QVCL) and 208–488 (KESS…LRLC). Positions 192–213 (FKADPKISKRRPSRERKESSEH) are disordered.

This is Coiled-coil domain-containing protein 77 (CCDC77) from Homo sapiens (Human).